Reading from the N-terminus, the 202-residue chain is Oocyte-secreted protein 1 (202 aa).

An N-terminal signal peptide occupies residues 1-21 (MKPFVGLLGLLLLLSFMKTCA). A disordered region spans residues 157-183 (QPNLSTSSEDHHVSTEPWASETSRSEA).

The protein belongs to the PLAC1 family. Expressed in oocytes in primary through antral-stage follicles. Expressed in liver and ovary.

The protein localises to the secreted. Functionally, may be involved in cell differentiation. This chain is Oocyte-secreted protein 1 (Oosp1), found in Mus musculus (Mouse).